We begin with the raw amino-acid sequence, 501 residues long: MDLIFSLETWVLLAASLVLLYLYGTSTHGLFKKMGIPGPTPLPFIGTILEYRKGIWDFDIECRKKYGKMWGLFDGRQPLMVITDPDMIKTVLVKECYSVFTNRRSFGPVGFMKKAVSISEDEDWKRVRTLLSPTFTSGKLKEMLPIIAQYGDVLVKNLRQEAEKGKPVDLKEIFGAYSMDVITGTSFGVNIDSLRNPQDPFVKNVRRLLKFSFFDPLLLSITLFPFLTPIFEALHISMFPKDVMDFLKTSVEKIKDDRLKDKQKRRVDFLQLMINSQNSKEIDSHKALDDIEVVAQSIIILFAGYETTSSTLSFIMHLLATHPDVQQKLQEEIDTLLPNKELATYDTLVKMEYLDMVVNETLRLYPIAGRLERVCKKDVDINGTFIPKGTIVMMPTYALHRDPQHWTEPDEFRPERFSKKNKDNINPYIYHPFGAGPRNCLGMRFALMNIKLALVRLMQNFSFKLCKETQVPLKLGKQGLLQPEKPIVLKVVSRDGIIRGA.

Cys-440 is a binding site for heme.

This sequence belongs to the cytochrome P450 family. Requires heme as cofactor.

It localises to the endoplasmic reticulum membrane. Its subcellular location is the microsome membrane. It catalyses the reaction an organic molecule + reduced [NADPH--hemoprotein reductase] + O2 = an alcohol + oxidized [NADPH--hemoprotein reductase] + H2O + H(+). Exhibits progesterone 6 beta-hydroxylase activity. This is Cytochrome P450 3A6 (CYP3A6) from Oryctolagus cuniculus (Rabbit).